Here is a 337-residue protein sequence, read N- to C-terminus: MTQVFQGRSFLAEKDFTREEFEYLIDFAAHLKDLKKRGIPHHYLEGKNIALLFEKTSTRTRAAFTTAAIDLGAHPEYLGANDIQLGKKESTEDTAKVLGRMFDGIEFRGFSQRMVEELAEFSGVPVWNGLTDEWHPTQMLADYLTVKENFGKLEGLTLVYCGDGRNNVANSLLVAGTLLGVNVHIFSPKELFPAEDIVKLAEGYAKASGAHVLVTDNADEAVKGADVLYTDVWVSMGEEDKFEERVKLLKPYQVNMELVKKAANDNLIFLHCLPAFHDTNTVYGKDVAEKFGVEEMEVTDEVFRSKYARHFDQAENRMHTIKAVMAATLGNLFIPKV.

Carbamoyl phosphate is bound by residues 57-60, Gln-84, Arg-108, and 135-138; these read STRT and HPTQ. Residues Asn-167, Asp-231, and 235-236 contribute to the L-ornithine site; that span reads SM. Residues 272 to 273 and Arg-317 contribute to the carbamoyl phosphate site; that span reads CL.

It belongs to the aspartate/ornithine carbamoyltransferase superfamily. OTCase family.

Its subcellular location is the cytoplasm. The catalysed reaction is carbamoyl phosphate + L-ornithine = L-citrulline + phosphate + H(+). It participates in amino-acid degradation; L-arginine degradation via ADI pathway; carbamoyl phosphate from L-arginine: step 2/2. In terms of biological role, reversibly catalyzes the transfer of the carbamoyl group from carbamoyl phosphate (CP) to the N(epsilon) atom of ornithine (ORN) to produce L-citrulline. This chain is Ornithine carbamoyltransferase, found in Streptococcus equi subsp. equi (strain 4047).